Reading from the N-terminus, the 235-residue chain is Homeobox protein Nkx-2.8 (235 aa).

Residues 51 to 67 show a composition bias toward polar residues; that stretch reads SDESGLETSPADSSQLA. A disordered region spans residues 51–86; it reads SDESGLETSPADSSQLASLRRESPGSDPEKRRKRRV. Basic and acidic residues predominate over residues 69 to 80; sequence LRRESPGSDPEK. The homeobox DNA-binding region spans 81–140; that stretch reads RRKRRVLFSKAQTLELERRFRQQRYLSAPEREQLARLLRLTPTQVKIWFQNHRYKLKRGR.

The protein belongs to the NK-2 homeobox family. In terms of tissue distribution, prominent expression in ventral brain and neural tube structures.

The protein localises to the nucleus. Possible role in the specification of a distinct subset of neurons. This is Homeobox protein Nkx-2.8 (Nkx2-8) from Mus musculus (Mouse).